A 412-amino-acid polypeptide reads, in one-letter code: MKENFNISKLKNGLTILTYNMPYVHSVAINLIAKVGARYENEEEEGISHFLEHMAFKGTKTRTAQQIAEEFDSIGGYFNAYTGYENTVYYVRVLSENCHKALNILADIIQNSIFADEEISKEYQIIMQEIAHHHDNPDDLIYETFYNTVYKDQPLGKSILGTAKTLVKFTQEHFLNFIGKHYNAENLYLSIAGNIEHNKIVIIAEELFASLKQGVTSSFIPAKYIGGKGFIHKELEQTSLVLGFECTSYINLEKLYQTYLLSIIFGGGVSSRLFQSIREKLGLAYVVGSYNSAYFDSGVFTIYASTAHEKLELLYSEIKNEIIKITETVSTEELMRAKIQLRSNLQMAQEQNSYKSEEIGKNYSVFGKYILPEEIIEIITNIKADDIINTANKIFSGTTALAIIGPNDLNGF.

Histidine 49 serves as a coordination point for Zn(2+). The Proton acceptor role is filled by glutamate 52. 2 residues coordinate Zn(2+): histidine 53 and glutamate 129.

The protein belongs to the peptidase M16 family. The cofactor is Zn(2+).

This is an uncharacterized protein from Rickettsia typhi (strain ATCC VR-144 / Wilmington).